The chain runs to 348 residues: Fasciculation and elongation protein zeta-2 (348 aa).

Positions 11–40 (YEFQEPAGSVQEQENCNASPEAGAGAHAGG) are disordered. 3 positions are modified to phosphoserine: S130, S171, and S190. A coiled-coil region spans residues 206 to 280 (ERVKRLSVSE…TAKKKKKLKS (75 aa)). The disordered stretch occupies residues 265–296 (QKEHKETAKKKKKLKSGSSQNGRSERSHMPGT).

The protein belongs to the zygin family. Homodimer; disulfide-linked. May form heterodimers with FEZ1. Interacts with synaptotagmin.

Its function is as follows. Involved in axonal outgrowth and fasciculation. The protein is Fasciculation and elongation protein zeta-2 (Fez2) of Mus musculus (Mouse).